Here is a 59-residue protein sequence, read N- to C-terminus: UPF0181 protein CKO_01169 (59 aa).

Belongs to the UPF0181 family.

The polypeptide is UPF0181 protein CKO_01169 (Citrobacter koseri (strain ATCC BAA-895 / CDC 4225-83 / SGSC4696)).